We begin with the raw amino-acid sequence, 963 residues long: Importin-13 (963 aa).

HEAT repeat units lie at residues 24 to 54, 56 to 88, 95 to 135, 142 to 179, 194 to 231, 236 to 268, 276 to 325, 330 to 372, 375 to 438, 440 to 476, 487 to 522, 524 to 558, 562 to 600, 603 to 648, 676 to 716, 720 to 754, 761 to 803, 815 to 845, 860 to 893, and 897 to 931; these read ESVEKALHQLYYDPNIENKNLAQKWLMQAQV, PQAWHFSWQLLQPDKVPEIQYFGASALPIKTSR, TDQY…LSMM, AVADMVRLFQAEDSPVDGQGRCLALLELLTVLPEEFQT, LAVECGAVFPLLEQLLQQPSSPSCVRQKVLKCFSSWVQ, LQDCEALIQAAFAALQDSELFDSSVEAIVNAIS, VNTL…ALLD, WQSF…DDIL, EAEK…YEML, AELLSNLYDKLGRLLTSSEEPYSWQHTEALLYGFQSI, VVPGLIGLIPRISISNVQLADTVMFTIGALSEWLAD, PVMINSVLPLVLHALGNPEPSVSSVSTLKKICREC, LPPYAANIVAVSQDVLMKQIHKTSQCMWLMQALGFLLSA, VEEI…SNLF, PVVV…VKTL, FAPMVPQLCEMLGRMYSTIPQASALDLTRQLVHIF, FPPI…ALKR, VKAVFQCAVLALKFPEAPTVKASCGFFTELL, EDGRMLLIAVLEAIGGQASRSLMDCFADILFALN, and FSLLSMWIKEALQPPGFPSARLSPEQKDTFSQQIL. Residues 45 to 111 form the Importin N-terminal domain; sequence AQKWLMQAQV…KAQLFTQITR (67 aa).

This sequence belongs to the importin beta family. Interacts with UBC9, RAN, RBM8A, eIF-1A and PAX6.

Its subcellular location is the cytoplasm. The protein localises to the nucleus. Functionally, functions in nuclear protein import as nuclear transport receptor. Serves as receptor for nuclear localization signals (NLS) in cargo substrates. Is thought to mediate docking of the importin/substrate complex to the nuclear pore complex (NPC) through binding to nucleoporin and the complex is subsequently translocated through the pore by an energy requiring, Ran-dependent mechanism. At the nucleoplasmic side of the NPC, Ran binds to the importin, the importin/substrate complex dissociates and importin is re-exported from the nucleus to the cytoplasm where GTP hydrolysis releases Ran. The directionality of nuclear import is thought to be conferred by an asymmetric distribution of the GTP- and GDP-bound forms of Ran between the cytoplasm and nucleus. Mediates the nuclear import of UBC9, the RBM8A/MAGOH complex, PAX6 and probably other members of the paired homeobox family. Also mediates nuclear export of eIF-1A, and the cytoplasmic release of eIF-1A is triggered by the loading of import substrates onto IPO13. This Pongo abelii (Sumatran orangutan) protein is Importin-13 (IPO13).